The chain runs to 144 residues: Austinoid biosynthesis clusters protein S (144 aa).

Belongs to the trt14 isomerase family. In terms of assembly, homodimer.

The protein operates within secondary metabolite biosynthesis; terpenoid biosynthesis. Part of the gene cluster B that mediates the biosynthesis of the fungal meroterpenoid acetoxydehydroaustin. The first step of the pathway is the synthesis of 3,5-dimethylorsellinic acid by the polyketide synthase ausA. 3,5-dimethylorsellinic acid is then prenylated by the polyprenyl transferase ausN. Further epoxidation by the FAD-dependent monooxygenase ausM and cyclization by the probable terpene cyclase ausL lead to the formation of protoaustinoid A. Protoaustinoid A is then oxidized to spiro-lactone preaustinoid A3 by the combined action of the FAD-binding monooxygenases ausB and ausC, and the dioxygenase ausE. Acid-catalyzed keto-rearrangement and ring contraction of the tetraketide portion of preaustinoid A3 by ausJ lead to the formation of preaustinoid A4. The aldo-keto reductase ausK, with the help of ausH, is involved in the next step by transforming preaustinoid A4 into isoaustinone which is in turn hydroxylated by the P450 monooxygenase ausI to form austinolide. The cytochrome P450 monooxygenase ausG then modifies austinolide to austinol. Austinol is further acetylated to austin by the O-acetyltransferase ausP, which spontaneously changes to dehydroaustin. The cytochrome P450 monooxygenase then converts dehydroaustin is into 7-dehydrodehydroaustin. The hydroxylation catalyzed by ausR permits the second O-acetyltransferase ausQ to add an additional acetyl group to the molecule, leading to the formation of acetoxydehydroaustin. Due to genetic rearrangements of the clusters and the subsequent loss of some enzymes, the end product of the Penicillium brasilianum austinoid biosynthesis clusters is acetoxydehydroaustin. AusS is necessary for austinoids production and may play a possible function as a regulator. This Penicillium brasilianum protein is Austinoid biosynthesis clusters protein S.